A 1055-amino-acid polypeptide reads, in one-letter code: Kinesin-like protein KIN-7D, mitochondrial (1055 aa).

Over residues 1 to 23 (MASSSSRTRSSRPPSPASSTSSS) the composition is skewed to low complexity. The disordered stretch occupies residues 1 to 36 (MASSSSRTRSSRPPSPASSTSSSHLSNRLIPRSNST). A mitochondrion-targeting transit peptide spans 1 to 96 (MASSSSRTRS…PMDDTISSER (96 aa)). The Kinesin motor domain occupies 98 to 415 (SISVTVRFRP…LKFASRAKSI (318 aa)). An ATP-binding site is contributed by 178-185 (GVTSSGKT). Coiled coils occupy residues 419 to 503 (ASRN…ILVS), 618 to 653 (PENS…GEAS), and 694 to 823 (LQEK…LAQT). A disordered region spans residues 826 to 856 (PMNGVNRKYNDGARSGRKGRISSSRSSGDEF). Positions 880 to 911 (LESALAEKEFIEDEYRKKAEEAKRREEALEND) form a coiled coil. The disordered stretch occupies residues 926–963 (NGALPEPNGTDPGRELEKSQSHAVLKERQVSSAPRQPE). Positions 937 to 954 (PGRELEKSQSHAVLKERQ) are enriched in basic and acidic residues. The RING-type zinc-finger motif lies at 1008 to 1043 (CKVCFESPTAAILLPCRHFCLCKSCSLACSECPICR).

This sequence belongs to the TRAFAC class myosin-kinesin ATPase superfamily. Kinesin family. KIN-7 subfamily.

The protein localises to the mitochondrion. This Arabidopsis thaliana (Mouse-ear cress) protein is Kinesin-like protein KIN-7D, mitochondrial.